The primary structure comprises 402 residues: Enoyl-[acyl-carrier-protein] reductase [NADH] (402 aa).

Residues 48 to 53, 74 to 75, 111 to 112, and 140 to 141 each bind NAD(+); these read GASSGY, FE, DA, and LA. Tyr-226 lines the substrate pocket. Tyr-236 functions as the Proton donor in the catalytic mechanism. Residues Lys-245 and 274 to 276 contribute to the NAD(+) site; that span reads VVT.

It belongs to the TER reductase family. As to quaternary structure, monomer.

It carries out the reaction a 2,3-saturated acyl-[ACP] + NAD(+) = a (2E)-enoyl-[ACP] + NADH + H(+). Its pathway is lipid metabolism; fatty acid biosynthesis. Involved in the final reduction of the elongation cycle of fatty acid synthesis (FAS II). Catalyzes the reduction of a carbon-carbon double bond in an enoyl moiety that is covalently linked to an acyl carrier protein (ACP). The chain is Enoyl-[acyl-carrier-protein] reductase [NADH] from Xanthomonas campestris pv. campestris (strain 8004).